The sequence spans 161 residues: SsrA-binding protein (161 aa).

This sequence belongs to the SmpB family.

The protein resides in the cytoplasm. In terms of biological role, required for rescue of stalled ribosomes mediated by trans-translation. Binds to transfer-messenger RNA (tmRNA), required for stable association of tmRNA with ribosomes. tmRNA and SmpB together mimic tRNA shape, replacing the anticodon stem-loop with SmpB. tmRNA is encoded by the ssrA gene; the 2 termini fold to resemble tRNA(Ala) and it encodes a 'tag peptide', a short internal open reading frame. During trans-translation Ala-aminoacylated tmRNA acts like a tRNA, entering the A-site of stalled ribosomes, displacing the stalled mRNA. The ribosome then switches to translate the ORF on the tmRNA; the nascent peptide is terminated with the 'tag peptide' encoded by the tmRNA and targeted for degradation. The ribosome is freed to recommence translation, which seems to be the essential function of trans-translation. This Vibrio campbellii (strain ATCC BAA-1116) protein is SsrA-binding protein.